Reading from the N-terminus, the 289-residue chain is tRNA pseudouridine synthase B (289 aa).

Catalysis depends on Asp38, which acts as the Nucleophile.

The protein belongs to the pseudouridine synthase TruB family. Type 1 subfamily.

The enzyme catalyses uridine(55) in tRNA = pseudouridine(55) in tRNA. Its function is as follows. Responsible for synthesis of pseudouridine from uracil-55 in the psi GC loop of transfer RNAs. The chain is tRNA pseudouridine synthase B from Clostridium kluyveri (strain ATCC 8527 / DSM 555 / NBRC 12016 / NCIMB 10680 / K1).